The following is a 502-amino-acid chain: Probable ADP-dependent glucokinase (502 aa).

The first 32 residues, 1-32, serve as a signal peptide directing secretion; it reads MFSETFVPSIFSYKHRLLHLSVLFFIVPYWYS. The 454-residue stretch at 44–497 folds into the ADPK domain; that stretch reads SVETAMFLSW…LLYSQFYRLN (454 aa). N-linked (GlcNAc...) asparagine glycans are attached at residues asparagine 89 and asparagine 190. 3 residues coordinate Mg(2+): glutamate 290, glutamate 320, and aspartate 481. The active-site Proton acceptor is the aspartate 481.

It belongs to the ADP-dependent glucokinase family. As to quaternary structure, monomer. The cofactor is Mg(2+).

Its subcellular location is the secreted. It catalyses the reaction D-glucose + ADP = D-glucose 6-phosphate + AMP + H(+). The protein operates within carbohydrate degradation; glycolysis. Catalyzes the phosphorylation of D-glucose to D-glucose 6-phosphate using ADP as the phosphate donor. GDP and CDP can replace ADP, but with reduced efficiency. The polypeptide is Probable ADP-dependent glucokinase (Caenorhabditis elegans).